The sequence spans 622 residues: Sodium-dependent serotonin transporter (622 aa).

The segment at 1–53 (MDRSGSSDFAGAAATTGRSNPAPWSDDKESPNNEDDSNEDDGDHTTPAKVTDP) is disordered. The Cytoplasmic portion of the chain corresponds to 1–82 (MDRSGSSDFA…TRETWGQKAE (82 aa)). Acidic residues predominate over residues 32 to 42 (NNEDDSNEDDG). A run of 3 helical transmembrane segments spans residues 83 to 103 (FLLA…FPYI), 111 to 130 (AFLV…LFYM), and 155 to 175 (GVGY…NTII). The Na(+) site is built by Gly89, Ala91, Val92, and Asn96. Residues 176–244 (GWAVYYLFAS…NGLDFMGPVK (69 aa)) lie on the Extracellular side of the membrane. A disulfide bridge links Cys195 with Cys204. N-linked (GlcNAc...) asparagine glycosylation occurs at Asn211. The next 5 membrane-spanning stretches (helical) occupy residues 245–263 (PTLA…FSLW), 272–289 (VVWV…ILLV), 325–342 (IFFS…LSSY), 354–375 (LITS…FSVL), and 408–427 (MSGS…TLGL). Residues Ser328, Asn360, Leu425, Asp428, and Ser429 each coordinate Na(+). 4 consecutive transmembrane segments (helical) span residues 455–473 (LFVL…PTMT), 489–509 (GLAI…FYGV), 530–549 (ICWT…FSIM), and 568–586 (VGWA…YIIY). The Cytoplasmic portion of the chain corresponds to 587–622 (KFFFASKGGCRQRLQESFQPEDNCGSVVPGQQGTSV).

The protein belongs to the sodium:neurotransmitter symporter (SNF) (TC 2.A.22) family. Expression is specific to cell bodies in the ventral ganglion of the embryonic and larval nervous system.

The protein resides in the cell membrane. Its function is as follows. Terminates the action of serotonin by its high affinity sodium-dependent reuptake into presynaptic terminals. The protein is Sodium-dependent serotonin transporter (SerT) of Drosophila melanogaster (Fruit fly).